A 727-amino-acid polypeptide reads, in one-letter code: Fatty acid oxidation complex subunit alpha (727 aa).

The interval 1–200 is enoyl-CoA hydratase; it reads MNDQQPFSAI…RQGLVDEAVP (200 aa). The tract at residues 316–727 is 3-hydroxyacyl-CoA dehydrogenase; sequence KPIHYVGILG…PPTDEDDSAS (412 aa).

It in the N-terminal section; belongs to the enoyl-CoA hydratase/isomerase family. In the central section; belongs to the 3-hydroxyacyl-CoA dehydrogenase family. Heterotetramer of two alpha chains (FadJ) and two beta chains (FadI).

It localises to the cytoplasm. It carries out the reaction a (3S)-3-hydroxyacyl-CoA = a (2E)-enoyl-CoA + H2O. The enzyme catalyses a 4-saturated-(3S)-3-hydroxyacyl-CoA = a (3E)-enoyl-CoA + H2O. The catalysed reaction is a (3S)-3-hydroxyacyl-CoA + NAD(+) = a 3-oxoacyl-CoA + NADH + H(+). It catalyses the reaction (3S)-3-hydroxybutanoyl-CoA = (3R)-3-hydroxybutanoyl-CoA. It functions in the pathway lipid metabolism; fatty acid beta-oxidation. In terms of biological role, catalyzes the formation of a hydroxyacyl-CoA by addition of water on enoyl-CoA. Also exhibits 3-hydroxyacyl-CoA epimerase and 3-hydroxyacyl-CoA dehydrogenase activities. This chain is Fatty acid oxidation complex subunit alpha, found in Pectobacterium carotovorum subsp. carotovorum (strain PC1).